Consider the following 382-residue polypeptide: Gap junction alpha-1 protein (382 aa).

The Cytoplasmic portion of the chain corresponds to 2–23; the sequence is GDWSALGKLLDKVQAYSTAGGK. Position 5 is a phosphoserine (S5). The helical transmembrane segment at 24–44 threads the bilayer; the sequence is VWLSVLFIFRILLLGTAVESA. At 45-76 the chain is on the extracellular side; sequence WGDEQSAFRCNTQQPGCENVCYDKSFPISHVR. 2 disulfide bridges follow: C54/C192 and C187/C198. The chain crosses the membrane as a helical span at residues 77-97; it reads FWVLQIIFVSVPTLLYLAHVF. Residues 98 to 155 lie on the Cytoplasmic side of the membrane; sequence YVMRKEEKLNKKEEELKVAQTDGVNVEMHLKQIEIKKFKYGIEEHGKVKMRGGLLRTY. K144 participates in a covalent cross-link: Glycyl lysine isopeptide (Lys-Gly) (interchain with G-Cter in SUMO). A helical transmembrane segment spans residues 156–176; that stretch reads IISILFKSVFEVAFLLIQWYI. Residues 177-207 lie on the Extracellular side of the membrane; it reads YGFSLSAVYTCKRDPCPHQVDCFLSRPTEKT. The chain crosses the membrane as a helical span at residues 208–228; sequence IFIIFMLVVSLVSLALNIIEL. At 229–382 the chain is on the cytoplasmic side; sequence FYVFFKGVKD…SRPRPDDLEI (154 aa). Residue K237 forms a Glycyl lysine isopeptide (Lys-Gly) (interchain with G-Cter in SUMO) linkage. The interval 244 to 382 is interaction with NOV; the sequence is SDPYHATTGP…SRPRPDDLEI (139 aa). Y247 bears the Phosphotyrosine mark. Phosphoserine occurs at positions 255, 257, and 262. Positions 264-382 are interaction with UBQLN4; sequence KYAYFNGCSS…SRPRPDDLEI (119 aa). Residue C271 is modified to S-nitrosocysteine. Residue T275 is modified to Phosphothreonine. Phosphoserine is present on residues S306, S314, and S325. The span at 317–332 shows a compositional bias: polar residues; it reads QNRMGQAGSTISNSHA. The interval 317 to 382 is disordered; it reads QNRMGQAGST…SRPRPDDLEI (66 aa). Phosphothreonine is present on T326. 4 positions are modified to phosphoserine: S328, S330, S341, and S365. Over residues 362 to 374 the composition is skewed to low complexity; it reads RPSSRASSRASSR. A Phosphoserine; by PKC/PRKCG and PKC/PRKCD modification is found at S368. 2 positions are modified to phosphoserine: S369 and S373.

This sequence belongs to the connexin family. Alpha-type (group II) subfamily. In terms of assembly, a connexon is composed of a hexamer of connexins. Interacts with CSNK1D. Interacts with RIC1/CIP150. Interacts (via C-terminus) with TJP1. Interacts (via C-terminus) with SRC (via SH3 domain). Interacts (not ubiquitinated) with UBQLN4 (via UBA domain). Interacts with CNST. Interacts with SGSM3. Interacts with NOV. Interacts with TMEM65. Interacts with ANK3/ANKG and PKP2. In terms of processing, phosphorylation at Ser-325, Ser-328 and Ser-330 by CK1 modulates gap junction assembly. Phosphorylated at Ser-368 by PRKCG; phosphorylation induces disassembly of gap junction plaques and inhibition of gap junction activity. Phosphorylation at Ser-368 by PRKCD triggers its internalization into small vesicles leading to proteasome-mediated degradation. Post-translationally, sumoylated with SUMO1, SUMO2 and SUMO3, which may regulate the level of functional Cx43 gap junctions at the plasma membrane. May be desumoylated by SENP1 or SENP2. Acetylated in the developing cortex; leading to delocalization from the cell membrane. In terms of processing, S-nitrosylation at Cys-271 is enriched at the muscle endothelial gap junction in arteries, it augments channel permeability and may regulate of smooth muscle cell to endothelial cell communication. In terms of tissue distribution, expressed in heart, non-sensory epithelial cells, and in fibrocytes of the spiral ligament and the spiral limbus. Expressed in bladder smooth muscle cells (at protein level). Expressed in astrocytes (at protein level).

The protein resides in the cell membrane. Its subcellular location is the cell junction. The protein localises to the gap junction. It localises to the endoplasmic reticulum. Gap junction protein that acts as a regulator of bladder capacity. A gap junction consists of a cluster of closely packed pairs of transmembrane channels, the connexons, through which materials of low MW diffuse from one cell to a neighboring cell. Negative regulator of bladder functional capacity: acts by enhancing intercellular electrical and chemical transmission, thus sensitizing bladder muscles to cholinergic neural stimuli and causing them to contract. May play a role in cell growth inhibition through the regulation of NOV expression and localization. Plays an essential role in gap junction communication in the ventricles. In terms of biological role, connexin 43 is possibly the ATP-induced pore of mouse macrophages. This Mus musculus (Mouse) protein is Gap junction alpha-1 protein (Gja1).